The primary structure comprises 161 residues: Phosphopantetheine adenylyltransferase (161 aa).

Ser-11 is a binding site for substrate. ATP contacts are provided by residues 11–12 (SF) and His-19. Substrate is bound by residues Lys-43, Leu-75, and Arg-89. ATP is bound by residues 90-92 (GLR), Glu-100, and 125-131 (YSYLSSS).

This sequence belongs to the bacterial CoaD family. As to quaternary structure, homohexamer. Mg(2+) is required as a cofactor.

Its subcellular location is the cytoplasm. The enzyme catalyses (R)-4'-phosphopantetheine + ATP + H(+) = 3'-dephospho-CoA + diphosphate. It participates in cofactor biosynthesis; coenzyme A biosynthesis; CoA from (R)-pantothenate: step 4/5. In terms of biological role, reversibly transfers an adenylyl group from ATP to 4'-phosphopantetheine, yielding dephospho-CoA (dPCoA) and pyrophosphate. This Geotalea daltonii (strain DSM 22248 / JCM 15807 / FRC-32) (Geobacter daltonii) protein is Phosphopantetheine adenylyltransferase.